The primary structure comprises 234 residues: Preprocaerulein type-4 (234 aa).

A signal peptide spans 1–26 (MFKGILLCVLFAVLSANPLSQPEGFA). Positions 27 to 73 (DEEERDVRGLASLLGKALKAALKIGANALGGSPQQREANDERRFADG) are excised as a propeptide. The residue at position 77 (Tyr-77) is a Sulfotyrosine. Phe-83 carries the post-translational modification Phenylalanine amide. A propeptide spanning residues 87 to 137 (DDEDDVNERDVRGFGSFLGKALKAGLKIGTHFLGGAPQQREANDERRFADG) is cleaved from the precursor. Tyr-141 bears the Sulfotyrosine mark. A Phenylalanine amide modification is found at Phe-147. Positions 151 to 152 (DG) are excised as a propeptide. Tyr-156 is modified (sulfotyrosine). Phe-162 is subject to Phenylalanine amide. The propeptide occupies 166–216 (DDEDDVHERDVRGFGSFLGKALKAALKIGANALGGSPQQREANDERRFADG). Residues 198-234 (LGGSPQQREANDERRFADGQQDYTGWMDFGRRNGEDD) are disordered. Sulfotyrosine is present on Tyr-220. At Phe-226 the chain carries Phenylalanine amide. A propeptide spanning residues 230-234 (NGEDD) is cleaved from the precursor.

It belongs to the gastrin/cholecystokinin family. Expressed by the skin glands.

The protein resides in the secreted. Functionally, the pharmacological activities of caerulein are quite similar to the physiological activities of gastrin and related peptides. The protein is Preprocaerulein type-4 of Xenopus borealis (Kenyan clawed frog).